The following is a 603-amino-acid chain: DNA mismatch repair protein MutL (603 aa).

Belongs to the DNA mismatch repair MutL/HexB family.

This protein is involved in the repair of mismatches in DNA. It is required for dam-dependent methyl-directed DNA mismatch repair. May act as a 'molecular matchmaker', a protein that promotes the formation of a stable complex between two or more DNA-binding proteins in an ATP-dependent manner without itself being part of a final effector complex. The polypeptide is DNA mismatch repair protein MutL (Listeria monocytogenes serotype 4a (strain HCC23)).